The sequence spans 373 residues: tRNA-specific 2-thiouridylase MnmA (373 aa).

ATP is bound by residues 12–19 and Met38; that span reads GMSGGVDS. The interaction with target base in tRNA stretch occupies residues 98 to 100; sequence NPD. Cys103 acts as the Nucleophile in catalysis. Cys103 and Cys200 are oxidised to a cystine. ATP is bound at residue Gly127. Positions 150–152 are interaction with tRNA; that stretch reads KDQ. The active-site Cysteine persulfide intermediate is the Cys200. An interaction with tRNA region spans residues 312 to 313; it reads RY.

It belongs to the MnmA/TRMU family.

It localises to the cytoplasm. It catalyses the reaction S-sulfanyl-L-cysteinyl-[protein] + uridine(34) in tRNA + AH2 + ATP = 2-thiouridine(34) in tRNA + L-cysteinyl-[protein] + A + AMP + diphosphate + H(+). Functionally, catalyzes the 2-thiolation of uridine at the wobble position (U34) of tRNA, leading to the formation of s(2)U34. The sequence is that of tRNA-specific 2-thiouridylase MnmA from Streptococcus pneumoniae (strain ATCC BAA-255 / R6).